The chain runs to 92 residues: Small ribosomal subunit protein uS19 (92 aa).

This sequence belongs to the universal ribosomal protein uS19 family.

Protein S19 forms a complex with S13 that binds strongly to the 16S ribosomal RNA. This Bartonella bacilliformis (strain ATCC 35685 / KC583 / Herrer 020/F12,63) protein is Small ribosomal subunit protein uS19.